Consider the following 168-residue polypeptide: Thermonuclease (168 aa).

The N-terminal stretch at 1-27 is a signal peptide; that stretch reads MKKITTGVLILAIAIVVLIFQYINGDG. Residues Arg64, Glu72, and Arg114 contribute to the active site.

This sequence belongs to the thermonuclease family. The cofactor is Ca(2+).

It localises to the secreted. The enzyme catalyses Endonucleolytic cleavage to nucleoside 3'-phosphates and 3'-phosphooligonucleotide end-products.. Enzyme that catalyzes the hydrolysis of both DNA and RNA at the 5'-position of the phosphodiester bond. The protein is Thermonuclease (nucI) of Staphylococcus intermedius.